Here is a 351-residue protein sequence, read N- to C-terminus: Biotin synthase (351 aa).

Residues 44 to 262 form the Radical SAM core domain; it reads NRVQVSTLLS…LAVARILMPQ (219 aa). Cys-59, Cys-63, and Cys-66 together coordinate [4Fe-4S] cluster. [2Fe-2S] cluster is bound by residues Cys-103, Cys-134, Cys-194, and Arg-266.

Belongs to the radical SAM superfamily. Biotin synthase family. In terms of assembly, homodimer. Requires [4Fe-4S] cluster as cofactor. [2Fe-2S] cluster serves as cofactor.

It carries out the reaction (4R,5S)-dethiobiotin + (sulfur carrier)-SH + 2 reduced [2Fe-2S]-[ferredoxin] + 2 S-adenosyl-L-methionine = (sulfur carrier)-H + biotin + 2 5'-deoxyadenosine + 2 L-methionine + 2 oxidized [2Fe-2S]-[ferredoxin]. Its pathway is cofactor biosynthesis; biotin biosynthesis; biotin from 7,8-diaminononanoate: step 2/2. Its function is as follows. Catalyzes the conversion of dethiobiotin (DTB) to biotin by the insertion of a sulfur atom into dethiobiotin via a radical-based mechanism. The protein is Biotin synthase of Pseudomonas fluorescens (strain Pf0-1).